A 208-amino-acid chain; its full sequence is Protein-L-isoaspartate O-methyltransferase (208 aa).

Ser59 is a catalytic residue.

This sequence belongs to the methyltransferase superfamily. L-isoaspartyl/D-aspartyl protein methyltransferase family.

It localises to the cytoplasm. The catalysed reaction is [protein]-L-isoaspartate + S-adenosyl-L-methionine = [protein]-L-isoaspartate alpha-methyl ester + S-adenosyl-L-homocysteine. Catalyzes the methyl esterification of L-isoaspartyl residues in peptides and proteins that result from spontaneous decomposition of normal L-aspartyl and L-asparaginyl residues. It plays a role in the repair and/or degradation of damaged proteins. The chain is Protein-L-isoaspartate O-methyltransferase from Klebsiella pneumoniae subsp. pneumoniae (strain ATCC 700721 / MGH 78578).